The primary structure comprises 133 residues: ATP synthase epsilon chain (133 aa).

Belongs to the ATPase epsilon chain family. As to quaternary structure, F-type ATPases have 2 components, CF(1) - the catalytic core - and CF(0) - the membrane proton channel. CF(1) has five subunits: alpha(3), beta(3), gamma(1), delta(1), epsilon(1). CF(0) has three main subunits: a, b and c.

Its subcellular location is the cell membrane. In terms of biological role, produces ATP from ADP in the presence of a proton gradient across the membrane. The protein is ATP synthase epsilon chain of Clostridium botulinum (strain Langeland / NCTC 10281 / Type F).